The chain runs to 416 residues: Gamma-glutamyl phosphate reductase (416 aa).

It belongs to the gamma-glutamyl phosphate reductase family.

The protein localises to the cytoplasm. It catalyses the reaction L-glutamate 5-semialdehyde + phosphate + NADP(+) = L-glutamyl 5-phosphate + NADPH + H(+). The protein operates within amino-acid biosynthesis; L-proline biosynthesis; L-glutamate 5-semialdehyde from L-glutamate: step 2/2. Catalyzes the NADPH-dependent reduction of L-glutamate 5-phosphate into L-glutamate 5-semialdehyde and phosphate. The product spontaneously undergoes cyclization to form 1-pyrroline-5-carboxylate. The chain is Gamma-glutamyl phosphate reductase from Streptococcus pyogenes serotype M3 (strain ATCC BAA-595 / MGAS315).